Reading from the N-terminus, the 541-residue chain is Tryptophan N-monooxygenase 1 (541 aa).

A helical membrane pass occupies residues 21-41 (FSTLYLLSTLQAFVAITLVML). Cysteine 477 is a heme binding site.

It belongs to the cytochrome P450 family. Requires heme as cofactor. As to expression, found in all tissues tested. Highest expression in roots, and low expression in stem.

It is found in the membrane. The catalysed reaction is L-tryptophan + 2 reduced [NADPH--hemoprotein reductase] + 2 O2 = (E)-(indol-3-yl)acetaldehyde oxime + 2 oxidized [NADPH--hemoprotein reductase] + CO2 + 3 H2O + 2 H(+). Converts tryptophan to indole-3-acetaldoxime, a precursor for tryptophan-derived glucosinolates and indole-3-acetic acid (IAA). Involved in the biosynthetic pathway to 4-hydroxyindole-3-carbonyl nitrile (4-OH-ICN), a cyanogenic metabolite required for inducible pathogen defense. This Arabidopsis thaliana (Mouse-ear cress) protein is Tryptophan N-monooxygenase 1 (CYP79B2).